The following is a 486-amino-acid chain: FAD-dependent oxidoreductase domain-containing protein 1 (486 aa).

Residues 66–82 form a helical membrane-spanning segment; sequence VVIVGGGVLGLSVAYWL.

In terms of assembly, associates with components of the mitochondrial respiratory chain complex I. It depends on FAD as a cofactor.

It localises to the mitochondrion inner membrane. Required for the assembly of the mitochondrial membrane respiratory chain NADH dehydrogenase (Complex I). Involved in mid-late stages of complex I assembly. This is FAD-dependent oxidoreductase domain-containing protein 1 (FOXRED1) from Bos taurus (Bovine).